The following is a 248-amino-acid chain: NADH dehydrogenase [ubiquinone] flavoprotein 2, mitochondrial (248 aa).

The transit peptide at 1–31 (MFSLALRARASGLTAQWGRHARNLHKTAVQN) directs the protein to the mitochondrion. Positions 134, 139, 175, and 179 each coordinate [2Fe-2S] cluster. Y192 is subject to Phosphotyrosine; by SRC. The segment at 229 to 248 (GLTSLTEPPKGPGFGVQAGL) is disordered.

Belongs to the complex I 24 kDa subunit family. As to quaternary structure, core subunit of respiratory chain NADH dehydrogenase (Complex I) which is composed of 45 different subunits. This is a component of the flavoprotein-sulfur (FP) fragment of the enzyme. Requires [2Fe-2S] cluster as cofactor.

The protein resides in the mitochondrion inner membrane. It catalyses the reaction a ubiquinone + NADH + 5 H(+)(in) = a ubiquinol + NAD(+) + 4 H(+)(out). Core subunit of the mitochondrial membrane respiratory chain NADH dehydrogenase (Complex I) which catalyzes electron transfer from NADH through the respiratory chain, using ubiquinone as an electron acceptor. Parts of the peripheral arm of the enzyme, where the electrons from NADH are accepted by flavin mononucleotide (FMN) and then passed along a chain of iron-sulfur clusters by electron tunnelling to the final acceptor ubiquinone. Contains one iron-sulfur cluster. In Rattus norvegicus (Rat), this protein is NADH dehydrogenase [ubiquinone] flavoprotein 2, mitochondrial.